Here is a 130-residue protein sequence, read N- to C-terminus: Lipoprotein LpqS (130 aa).

The signal sequence occupies residues 1-23; sequence MVWMRSAIVAVALGVTVAAVAAA. Cys-24 is lipidated: N-palmitoyl cysteine. Residue Cys-24 is the site of S-diacylglycerol cysteine attachment.

The protein localises to the cell membrane. May play an essential role in M.tuberculosis replication and survival inside the host cell. This chain is Lipoprotein LpqS, found in Mycobacterium tuberculosis (strain ATCC 25618 / H37Rv).